The following is a 135-amino-acid chain: MTLRNKAFHQLRQLFQQHTARWQHELPDLTKPQYAVMRAIADKPGIEQVALIEAAVSTKATLAEMLARMENRGLVRREHDAADKRRRFVWLTAEGEKILAAAIPIGDSVDEEFLGRLSAEEQELFVQLVRKMMNT.

The region spanning 4-134 (RNKAFHQLRQ…FVQLVRKMMN (131 aa)) is the HTH marR-type domain. Residues 48-71 (QVALIEAAVSTKATLAEMLARMEN) constitute a DNA-binding region (H-T-H motif).

In terms of biological role, involved in the temperature-dependent positive control of flagellum-driven swimming motility and cellular aggregation. Regulates fliC expression by directly interacting with fliC promoter. In Escherichia coli O157:H7, this protein is Transcriptional regulator HosA (hosA).